A 1393-amino-acid polypeptide reads, in one-letter code: MNQEVMNLFNPTTPAPTFDQIKISIASPEKISSWSYGEIKKPETINYRTFKPERDGLFCARIFGPIKDYECLCGKYKRMKYKGIICEKCGVEVTLSRVRRERMGHIELAAPVAHIWFLKSLPSRIGLLLDMTLKDLERILYFEYFVVTEPGLTPLKYRQLLSEDDYLRAQDEYGEDSFTAMIGAEAIRELLRSMDLEKLAADIRVEIANSTTELKPKKLAKRLKIVEAFQASGNKPEWMILTHVPVIPPDLRPLVPLDGGRFATSDLNDLYRRVINRNNRLKRLIELRAPDIIIRNEKRMLQEAVDALFDNGRRGRVITGANKRPLKSLADMLKGKQGRFRQNLLGKRVDYSGRSVIVVGPELKLHQCGLPKKMALELFKPFIYARLDAKGHSATVKQAKKLVEKERPEVWDILDEVIREHPVMLNRAPTLHRLGIQAFEPVLIEGKAIQLHPLVCSAFNADFDGDQMAVHVPLSLEAQLEARVLMMSTNNILHPANGAPIIVPSQDIVLGLYYLSLMREKEPGEGMMFADMGEIDHAIAAKAITLHTKIRGRYIGVDADGKRYSKIYETTPGRMKIGELLPKHHKVPFDVVNKLMTKKEISNMIDTVYRHCGQKESVIFCDRLMSLGFYNAFRAGISFGKDDMVVPAKKWQLVEETRTLTKEYEQQYNDGLITQGEKYNKVVDAWGKCTDRIADEMMKEISAVKKDPETGREKQINSIYMMSHSGARGSPAQMKQLAGMRGLMAKPSGEIIESPIISNFKEGLTVMEYFNSTHGARKGLADTALKTANSGYLTRRLVDVAQDSIINERDCGSNNGIHMRAIIDSGQVVASLASRVLGRTAVEDVVEPATGDIIVPKGTMIEEHHIERINKSGIQEIKIRSVLTCETRNGVCGTCYGRDLARGTPVNMGEAVGVIAAQSIGEPGTQLTMRTFHIGGAAQLADSSFVETNFEGTVRVRNRNVARNSEGDLVVMARNLAIVVVDHDGTERAVHRIQYGSRLKVDEGDTVKRGQRIAEWDPYTRPILTEVDGTVGFEDLVEGQSMSEAVDEATGIAKRVVTDSRSVRGADLRPAIVLKGKDGKVSKLPRGGDARYTLPVEAIISVDPGQTIKAGDVVARVPMESAKTRDITGGLPRVAELFEARRPKDAAIIAEISGTVRFGRDYKNKRRLTIEPTEGGDAVEYLIPKGKHIHLQDGDVVEKGDFLVDGNPAPHDILAIKGVEELAAFLVNEIQEVYRLQGVNINDKHIEVIVRNMLQKVELDDAGDTEFLDGEQVDRIELAEANERMKEQGLKPATGHPVLLGITKASLQTRSFFSAASFQETTRVLTEAAVNGKVDPLDGLKENVIVGRLIPAGTGAQMNKLRVTANSRDDLILATRGESEEPSMVEGSADAAE.

Zn(2+) is bound by residues C71, C73, C86, and C89. Positions 462, 464, and 466 each coordinate Mg(2+). C811, C885, C892, and C895 together coordinate Zn(2+).

It belongs to the RNA polymerase beta' chain family. In terms of assembly, the RNAP catalytic core consists of 2 alpha, 1 beta, 1 beta' and 1 omega subunit. When a sigma factor is associated with the core the holoenzyme is formed, which can initiate transcription. Mg(2+) serves as cofactor. It depends on Zn(2+) as a cofactor.

It catalyses the reaction RNA(n) + a ribonucleoside 5'-triphosphate = RNA(n+1) + diphosphate. Its function is as follows. DNA-dependent RNA polymerase catalyzes the transcription of DNA into RNA using the four ribonucleoside triphosphates as substrates. This is DNA-directed RNA polymerase subunit beta' from Azorhizobium caulinodans (strain ATCC 43989 / DSM 5975 / JCM 20966 / LMG 6465 / NBRC 14845 / NCIMB 13405 / ORS 571).